Consider the following 240-residue polypeptide: Probable septum site-determining protein MinC (240 aa).

This sequence belongs to the MinC family. Interacts with MinD and FtsZ.

In terms of biological role, cell division inhibitor that blocks the formation of polar Z ring septums. Rapidly oscillates between the poles of the cell to destabilize FtsZ filaments that have formed before they mature into polar Z rings. Prevents FtsZ polymerization. This is Probable septum site-determining protein MinC from Acinetobacter baumannii (strain ACICU).